The following is a 520-amino-acid chain: 4-hydroxyphenylacetate 3-monooxygenase oxygenase component (520 aa).

This sequence belongs to the FADH(2)-utilizing monooxygenase family. In terms of assembly, 4-HPA 3-monooxygenase consists of a reductase component HpaC and an oxygenase component HpaB.

The catalysed reaction is 4-hydroxyphenylacetate + FADH2 + O2 = 3,4-dihydroxyphenylacetate + FAD + H2O + H(+). The protein operates within aromatic compound metabolism; 4-hydroxyphenylacetate degradation; pyruvate and succinate semialdehyde from 4-hydroxyphenylacetate: step 1/7. Its function is as follows. Utilizes FADH(2) supplied by HpaC or by another flavin reductase, to catalyze the hydroxylation of 4-hydroxyphenylacetic acid, leading to the production of 3,4-DHPA. Can also oxidize phenol to catechol, and hydroxylate other phenol derivatives. This is 4-hydroxyphenylacetate 3-monooxygenase oxygenase component (hpaB) from Escherichia coli.